Here is a 572-residue protein sequence, read N- to C-terminus: Phosphoglucomutase-1 (572 aa).

Substrate is bound by residues Thr23, Arg27, 126–127, and Lys140; that span reads SH. Catalysis depends on Ser126, which acts as the Phosphoserine intermediate. A Mg(2+)-binding site is contributed by Ser126. Asp308, Asp310, and Asp312 together coordinate Mg(2+). Substrate-binding positions include 312-313, Thr373, 392-394, Lys405, and Arg527; these read DR and EES.

Belongs to the phosphohexose mutase family. Requires Mg(2+) as cofactor. In terms of processing, phosphorylated via a calcium-dependent protein kinase. Very rapidly (within 80 ms) dephosphorylated during triggered trichocyst exocytosis. Post-translationally, O-glycosylated with a short chain of mannose residues.

It localises to the cytoplasm. The enzyme catalyses alpha-D-glucose 1-phosphate = alpha-D-glucose 6-phosphate. In terms of biological role, may be involved in membrane fusion in exocytosis. The sequence is that of Phosphoglucomutase-1 (pp63-1) from Paramecium tetraurelia.